The chain runs to 267 residues: Ribosomal RNA small subunit methyltransferase A (267 aa).

The S-adenosyl-L-methionine site is built by Asn12, Ile14, Gly39, Glu60, Asp84, and Asn110.

This sequence belongs to the class I-like SAM-binding methyltransferase superfamily. rRNA adenine N(6)-methyltransferase family. RsmA subfamily.

Its subcellular location is the cytoplasm. The enzyme catalyses adenosine(1518)/adenosine(1519) in 16S rRNA + 4 S-adenosyl-L-methionine = N(6)-dimethyladenosine(1518)/N(6)-dimethyladenosine(1519) in 16S rRNA + 4 S-adenosyl-L-homocysteine + 4 H(+). Its function is as follows. Specifically dimethylates two adjacent adenosines (A1518 and A1519) in the loop of a conserved hairpin near the 3'-end of 16S rRNA in the 30S particle. May play a critical role in biogenesis of 30S subunits. The polypeptide is Ribosomal RNA small subunit methyltransferase A (Mesoplasma florum (strain ATCC 33453 / NBRC 100688 / NCTC 11704 / L1) (Acholeplasma florum)).